The following is a 255-amino-acid chain: NADPH-dependent FMN reductase ArsH (255 aa).

An FMN-binding site is contributed by 43–50 (SLRARSFS).

It belongs to the ArsH family. Homotetramer. FMN is required as a cofactor.

Functionally, has NADPH-dependent FMN reductase activity and very low azoreductase activity. No activity with NADH. This chain is NADPH-dependent FMN reductase ArsH, found in Shigella flexneri.